The following is a 355-amino-acid chain: MKLTYILLIAVVGVAIEAKSVKKSKAHHKKKRHETLADNYKLNRIKDSDCKDVADDCKAFGKLEKDDENSCFNNPDKARNECPVSCKLCVSKRSKKQSDYMGGYDLQPQQCSQQSCYETPQWSVQNCAVTCQLCQPGVSSGPVDQDVRCPFWGQYGYCSQQQQQQQTDGYISNNCPFSCNTYGSAQPAQQPYPYPIEALSPYQPNAMPTPPQGVTPAPLPPYFQQQGYGYPQQPQPTQPVQPGQTQAPTAAQSTPAPVQTTPASGKTTTEAAEETTTEAAAEGAETTAAPAATQAPAAAGQEGQQPAAGGQEPQEAQEQEGQQPGTEPAQSDKSNKKKHKKDKAQKKSKSHKKQH.

The first 18 residues, 1–18, serve as a signal peptide directing secretion; sequence MKLTYILLIAVVGVAIEA. 3 ShKT domains span residues 50–89, 107–134, and 140–182; these read CKDV…CKLC, QPQQ…CQLC, and SGPV…CNTY. 6 disulfide bridges follow: Cys-50–Cys-89, Cys-57–Cys-82, Cys-71–Cys-86, Cys-116–Cys-131, Cys-149–Cys-175, and Cys-158–Cys-179. The propeptide occupies 92-355; the sequence is KRSKKQSDYM…KKSKSHKKQH (264 aa). Residues 202–355 form a disordered region; sequence YQPNAMPTPP…KKSKSHKKQH (154 aa). The segment covering 207–221 has biased composition (pro residues); it reads MPTPPQGVTPAPLPP. 3 stretches are compositionally biased toward low complexity: residues 222-232, 240-270, and 277-332; these read YFQQQGYGYPQ, VQPG…TTTE, and TEAA…AQSD. Positions 335 to 355 are enriched in basic residues; that stretch reads NKKKHKKDKAQKKSKSHKKQH.

The protein belongs to the NEP3 family. As to expression, nematocytes. In late planulae, transcripts are found throughout the ectoderm in nematocytes, with high concentration of expressing cells in the oral pole. In primary polyps, is expressed in nematocytes in the body wall and physa ectoderm and in the upper and lower pharynx.

It localises to the nematocyst. The protein resides in the secreted. Neurotoxin. In vivo, induces pronounced contraction and tail twitching on zebrafish larvae, as well as death 5 hours later. The protein is Nematocyst expressed protein 3 of Nematostella vectensis (Starlet sea anemone).